Reading from the N-terminus, the 822-residue chain is Fibroblast growth factor receptor 1 (822 aa).

A signal peptide spans 1 to 21; that stretch reads MWGWRGLLFWAVLVTATLCTA. At 22–376 the chain is on the extracellular side; the sequence is RPAPTLPEQA…AVMTSPLYLE (355 aa). The Ig-like C2-type 1 domain maps to 25–119; it reads PTLPEQAQPW…DTTYFSVNVS (95 aa). An intrachain disulfide couples cysteine 55 to cysteine 101. N-linked (GlcNAc...) asparagine glycans are attached at residues asparagine 77 and asparagine 117. The tract at residues 120-162 is disordered; sequence DALPSSEDDDDDDDSSSEEKETDNTKPNRRPVAPYWTSPEKME. Residues 125–135 are compositionally biased toward acidic residues; that stretch reads SEDDDDDDDSS. Residues 136–145 show a composition bias toward basic and acidic residues; sequence SEEKETDNTK. Ig-like C2-type domains lie at 158–246 and 255–357; these read PEKM…YQLD and PILQ…AWLT. Residues 160–177 are heparin-binding; that stretch reads KMEKKLHAVPAAKTVKFK. A disulfide bond links cysteine 178 and cysteine 230. Residues asparagine 227, asparagine 240, asparagine 264, asparagine 296, asparagine 317, and asparagine 330 are each glycosylated (N-linked (GlcNAc...) asparagine). A disulfide bridge links cysteine 277 with cysteine 341. A helical transmembrane segment spans residues 377–397; sequence IIIYCTGAFLISCMVGSVIIY. Residues 398 to 822 are Cytoplasmic-facing; it reads KMKSGTKKSD…QLANGGLNRR (425 aa). Phosphotyrosine; by autocatalysis is present on tyrosine 463. The region spanning 478 to 767 is the Protein kinase domain; that stretch reads LVLGKPLGEG…VALTSNQEYL (290 aa). Residues 484–490, lysine 514, 562–564, and asparagine 568 contribute to the ATP site; these read LGEGCFG and EYA. Phosphotyrosine; by autocatalysis is present on residues tyrosine 583 and tyrosine 585. Aspartate 623 (proton acceptor) is an active-site residue. ATP-binding residues include arginine 627 and aspartate 641. Tyrosine 653, tyrosine 654, tyrosine 730, and tyrosine 766 each carry phosphotyrosine; by autocatalysis. Positions 770 to 822 are disordered; sequence SMPLDQDSPSFPDTRSSTCSSGEDSVFSHEPFPEEPCLPRHPTQLANGGLNRR. The segment covering 776 to 792 has biased composition (polar residues); the sequence is DSPSFPDTRSSTCSSGE.

Belongs to the protein kinase superfamily. Tyr protein kinase family. Fibroblast growth factor receptor subfamily. As to quaternary structure, monomer. Homodimer after ligand binding. Interacts predominantly with FGF1 and FGF2, but can also interact with FGF3, FGF4, FGF5, FGF6, FGF8, FGF10, FGF19, FGF21, FGF22 and FGF23 (in vitro). Ligand specificity is determined by tissue-specific expression of isoforms, and differences in the third Ig-like domain are crucial for ligand specificity. Affinity for fibroblast growth factors (FGFs) is increased by heparan sulfate glycosaminoglycans that function as coreceptors. Likewise, KLB increases the affinity for FGF19, FGF21 and FGF23. Interacts (phosphorylated on Tyr-766) with PLCG1 (via SH2 domains). Interacts with FRS2. Interacts (via C-terminus) with NEDD4 (via WW3 domain). Interacts with RPS6KA1. Interacts with KL. Interacts with SHB (via SH2 domain) and GRB10. Interacts with ANOS1; this interaction does not interfere with FGF2-binding to FGFR1, but prevents binding of heparin-bound FGF2. Interacts with SOX2 and SOX3. Interacts with FLRT1, FLRT2 and FLRT3. Found in a ternary complex with FGF1 and ITGAV:ITGB3. Post-translationally, autophosphorylated. Binding of FGF family members together with heparan sulfate proteoglycan or heparin promotes receptor dimerization and autophosphorylation on tyrosine residues. Autophosphorylation occurs in trans between the two FGFR molecules present in the dimer and proceeds in a highly ordered manner. Initial autophosphorylation at Tyr-653 increases the kinase activity by a factor of 50 to 100. After this, Tyr-583 becomes phosphorylated, followed by phosphorylation of Tyr-463, Tyr-766, Tyr-583 and Tyr-585. In a third stage, Tyr-654 is autophosphorylated, resulting in a further tenfold increase of kinase activity. Phosphotyrosine residues provide docking sites for interacting proteins and so are crucial for FGFR1 function and its regulation. Ubiquitinated. FGFR1 is rapidly ubiquitinated by NEDD4 after autophosphorylation, leading to internalization and lysosomal degradation. CBL is recruited to activated FGFR1 via FRS2 and GRB2, and mediates ubiquitination and subsequent degradation of FGFR1. In terms of processing, N-glycosylated in the endoplasmic reticulum. The N-glycan chains undergo further maturation to an Endo H-resistant form in the Golgi apparatus. As to expression, expressed in the parathyroid.

It localises to the cell membrane. The protein localises to the nucleus. It is found in the cytoplasm. The protein resides in the cytosol. Its subcellular location is the cytoplasmic vesicle. It catalyses the reaction L-tyrosyl-[protein] + ATP = O-phospho-L-tyrosyl-[protein] + ADP + H(+). Its activity is regulated as follows. Present in an inactive conformation in the absence of bound ligand. Ligand binding leads to dimerization and activation by sequential autophosphorylation on tyrosine residues. Tyrosine-protein kinase that acts as a cell-surface receptor for fibroblast growth factors and plays an essential role in the regulation of embryonic development, cell proliferation, differentiation and migration. Required for normal mesoderm patterning and correct axial organization during embryonic development, normal skeletogenesis and normal development of the gonadotropin-releasing hormone (GnRH) neuronal system. Phosphorylates PLCG1, FRS2, GAB1 and SHB. Ligand binding leads to the activation of several signaling cascades. Activation of PLCG1 leads to the production of the cellular signaling molecules diacylglycerol and inositol 1,4,5-trisphosphate. Phosphorylation of FRS2 triggers recruitment of GRB2, GAB1, PIK3R1 and SOS1, and mediates activation of RAS, MAPK1/ERK2, MAPK3/ERK1 and the MAP kinase signaling pathway, as well as of the AKT1 signaling pathway. Promotes phosphorylation of SHC1, STAT1 and PTPN11/SHP2. In the nucleus, enhances RPS6KA1 and CREB1 activity and contributes to the regulation of transcription. FGFR1 signaling is down-regulated by IL17RD/SEF, and by FGFR1 ubiquitination, internalization and degradation. The protein is Fibroblast growth factor receptor 1 (Fgfr1) of Rattus norvegicus (Rat).